We begin with the raw amino-acid sequence, 383 residues long: Putative glutamate--cysteine ligase 2 (383 aa).

It belongs to the glutamate--cysteine ligase type 2 family. YbdK subfamily.

It carries out the reaction L-cysteine + L-glutamate + ATP = gamma-L-glutamyl-L-cysteine + ADP + phosphate + H(+). Functionally, ATP-dependent carboxylate-amine ligase which exhibits weak glutamate--cysteine ligase activity. In Clavibacter michiganensis subsp. michiganensis (strain NCPPB 382), this protein is Putative glutamate--cysteine ligase 2.